The chain runs to 169 residues: S-ribosylhomocysteine lyase (169 aa).

The Fe cation site is built by His-54, His-58, and Cys-128.

Belongs to the LuxS family. Homodimer. The cofactor is Fe cation.

It catalyses the reaction S-(5-deoxy-D-ribos-5-yl)-L-homocysteine = (S)-4,5-dihydroxypentane-2,3-dione + L-homocysteine. Functionally, involved in the synthesis of autoinducer 2 (AI-2) which is secreted by bacteria and is used to communicate both the cell density and the metabolic potential of the environment. The regulation of gene expression in response to changes in cell density is called quorum sensing. Catalyzes the transformation of S-ribosylhomocysteine (RHC) to homocysteine (HC) and 4,5-dihydroxy-2,3-pentadione (DPD). The protein is S-ribosylhomocysteine lyase of Sulfurovum sp. (strain NBC37-1).